The following is a 210-amino-acid chain: Cytochrome c biogenesis ATP-binding export protein CcmA (210 aa).

In terms of domain architecture, ABC transporter spans 3–205 (LHLQAAGLAC…KPSGYRELNL (203 aa)). 37–44 (GPNGSGKT) lines the ATP pocket.

This sequence belongs to the ABC transporter superfamily. CcmA exporter (TC 3.A.1.107) family. In terms of assembly, the complex is composed of two ATP-binding proteins (CcmA) and two transmembrane proteins (CcmB).

It localises to the cell inner membrane. It carries out the reaction heme b(in) + ATP + H2O = heme b(out) + ADP + phosphate + H(+). Functionally, part of the ABC transporter complex CcmAB involved in the biogenesis of c-type cytochromes; once thought to export heme, this seems not to be the case, but its exact role is uncertain. Responsible for energy coupling to the transport system. In Pseudomonas putida (strain GB-1), this protein is Cytochrome c biogenesis ATP-binding export protein CcmA.